A 101-amino-acid polypeptide reads, in one-letter code: Large ribosomal subunit protein uL23 (101 aa).

The protein belongs to the universal ribosomal protein uL23 family. Part of the 50S ribosomal subunit. Contacts protein L29, and trigger factor when it is bound to the ribosome.

In terms of biological role, one of the early assembly proteins it binds 23S rRNA. One of the proteins that surrounds the polypeptide exit tunnel on the outside of the ribosome. Forms the main docking site for trigger factor binding to the ribosome. This is Large ribosomal subunit protein uL23 from Azoarcus sp. (strain BH72).